The chain runs to 534 residues: Cytokinin dehydrogenase 5 (534 aa).

Residues 1 to 20 (MAWCLVFMVFLIYCLISTVG) form the signal peptide. Positions 59 to 243 (TSAEPLAVFH…TRARIALEPA (185 aa)) constitute an FAD-binding PCMH-type domain. The FAD site is built by Ala93, Gly95, and Gly97. His98 carries the post-translational modification Pros-8alpha-FAD histidine. Positions 99 and 103 each coordinate FAD. An N-linked (GlcNAc...) asparagine glycan is attached at Asn152. Asp167, Ser172, Ser178, Ile182, and Ile233 together coordinate FAD. N-linked (GlcNAc...) asparagine glycosylation is present at Asn256. FAD is bound by residues Tyr484 and Gln522.

Belongs to the oxygen-dependent FAD-linked oxidoreductase family. As to quaternary structure, monomer. FAD is required as a cofactor. In terms of tissue distribution, expressed in inflorescence meristems.

It localises to the secreted. It is found in the extracellular space. It carries out the reaction N(6)-dimethylallyladenine + A + H2O = 3-methyl-2-butenal + adenine + AH2. In terms of biological role, catalyzes the oxidation of cytokinins, a family of N(6)-substituted adenine derivatives that are plant hormones, where the substituent is an isopentenyl group. The sequence is that of Cytokinin dehydrogenase 5 (CKX5) from Oryza sativa subsp. japonica (Rice).